Reading from the N-terminus, the 150-residue chain is Aspartate 1-decarboxylase (150 aa).

Catalysis depends on serine 24, which acts as the Schiff-base intermediate with substrate; via pyruvic acid. Serine 24 is modified (pyruvic acid (Ser)). Threonine 56 provides a ligand contact to substrate. The active-site Proton donor is the tyrosine 57. 72–74 (GAA) contacts substrate.

It belongs to the PanD family. As to quaternary structure, heterooctamer of four alpha and four beta subunits. It depends on pyruvate as a cofactor. Is synthesized initially as an inactive proenzyme, which is activated by self-cleavage at a specific serine bond to produce a beta-subunit with a hydroxyl group at its C-terminus and an alpha-subunit with a pyruvoyl group at its N-terminus.

It localises to the cytoplasm. It carries out the reaction L-aspartate + H(+) = beta-alanine + CO2. The protein operates within cofactor biosynthesis; (R)-pantothenate biosynthesis; beta-alanine from L-aspartate: step 1/1. Its function is as follows. Catalyzes the pyruvoyl-dependent decarboxylation of aspartate to produce beta-alanine. This chain is Aspartate 1-decarboxylase, found in Beijerinckia indica subsp. indica (strain ATCC 9039 / DSM 1715 / NCIMB 8712).